The sequence spans 138 residues: Large ribosomal subunit protein mL43 (138 aa).

Belongs to the mitochondrion-specific ribosomal protein mL43 family. As to quaternary structure, component of the mitochondrial large ribosomal subunit (mt-LSU). Mature N.crassa 74S mitochondrial ribosomes consist of a small (37S) and a large (54S) subunit. The 37S small subunit contains a 16S ribosomal RNA (16S mt-rRNA) and 32 different proteins. The 54S large subunit contains a 23S rRNA (23S mt-rRNA) and 42 different proteins.

The protein localises to the mitochondrion. Functionally, component of the mitochondrial ribosome (mitoribosome), a dedicated translation machinery responsible for the synthesis of mitochondrial genome-encoded proteins, including at least some of the essential transmembrane subunits of the mitochondrial respiratory chain. The mitoribosomes are attached to the mitochondrial inner membrane and translation products are cotranslationally integrated into the membrane. This is Large ribosomal subunit protein mL43 (mrpl51) from Neurospora crassa (strain ATCC 24698 / 74-OR23-1A / CBS 708.71 / DSM 1257 / FGSC 987).